Reading from the N-terminus, the 520-residue chain is GMP synthase [glutamine-hydrolyzing] (520 aa).

Residues 9-202 form the Glutamine amidotransferase type-1 domain; sequence TILIIDFGSQ…VHRIVGVKPG (194 aa). Cys-86 (nucleophile) is an active-site residue. Residues His-176 and Glu-178 contribute to the active site. The 193-residue stretch at 203 to 395 folds into the GMPS ATP-PPase domain; it reads WTMGAYREQA…LGLPDSFIGR (193 aa). 230–236 is a binding site for ATP; it reads SGGVDSS.

In terms of assembly, homodimer.

It catalyses the reaction XMP + L-glutamine + ATP + H2O = GMP + L-glutamate + AMP + diphosphate + 2 H(+). Its pathway is purine metabolism; GMP biosynthesis; GMP from XMP (L-Gln route): step 1/1. In terms of biological role, catalyzes the synthesis of GMP from XMP. The sequence is that of GMP synthase [glutamine-hydrolyzing] from Brucella abortus (strain S19).